The following is an 84-amino-acid chain: Small ribosomal subunit protein uS15 (84 aa).

The protein belongs to the universal ribosomal protein uS15 family. Part of the 30S ribosomal subunit. Forms a bridge to the 50S subunit in the 70S ribosome, contacting the 23S rRNA.

Its function is as follows. One of the primary rRNA binding proteins, it binds directly to 16S rRNA where it helps nucleate assembly of the platform of the 30S subunit by binding and bridging several RNA helices of the 16S rRNA. In terms of biological role, forms an intersubunit bridge (bridge B4) with the 23S rRNA of the 50S subunit in the ribosome. This is Small ribosomal subunit protein uS15 from Thermosipho africanus (strain TCF52B).